A 343-amino-acid polypeptide reads, in one-letter code: uncharacterized protein (343 aa).

33–40 (GPKSSGKS) is a binding site for ATP.

Belongs to the archaeal ATPase family.

This is an uncharacterized protein from Methanocaldococcus jannaschii (strain ATCC 43067 / DSM 2661 / JAL-1 / JCM 10045 / NBRC 100440) (Methanococcus jannaschii).